The sequence spans 348 residues: Phospho-2-dehydro-3-deoxyheptonate aldolase, Trp-sensitive (348 aa).

Belongs to the class-I DAHP synthase family.

It catalyses the reaction D-erythrose 4-phosphate + phosphoenolpyruvate + H2O = 7-phospho-2-dehydro-3-deoxy-D-arabino-heptonate + phosphate. It participates in metabolic intermediate biosynthesis; chorismate biosynthesis; chorismate from D-erythrose 4-phosphate and phosphoenolpyruvate: step 1/7. Functionally, stereospecific condensation of phosphoenolpyruvate (PEP) and D-erythrose-4-phosphate (E4P) giving rise to 3-deoxy-D-arabino-heptulosonate-7-phosphate (DAHP). The chain is Phospho-2-dehydro-3-deoxyheptonate aldolase, Trp-sensitive (aroH) from Shigella flexneri.